Here is a 1349-residue protein sequence, read N- to C-terminus: DNA-directed RNA polymerase subunit beta' (1349 aa).

Residues C219, C293, C300, and C303 each contribute to the Zn(2+) site. The tract at residues 1298–1349 is disordered; that stretch reads LDSPTLGESGFGSRRAERSVLDDEDELIADEVVDDDDFEEEEEDDEDDFDDE. Positions 1319–1349 are enriched in acidic residues; it reads DDEDELIADEVVDDDDFEEEEEDDEDDFDDE.

Belongs to the RNA polymerase beta' chain family. RpoC2 subfamily. As to quaternary structure, in cyanobacteria the RNAP catalytic core is composed of 2 alpha, 1 beta, 1 beta', 1 gamma and 1 omega subunit. When a sigma factor is associated with the core the holoenzyme is formed, which can initiate transcription. Zn(2+) serves as cofactor.

It carries out the reaction RNA(n) + a ribonucleoside 5'-triphosphate = RNA(n+1) + diphosphate. Functionally, DNA-dependent RNA polymerase catalyzes the transcription of DNA into RNA using the four ribonucleoside triphosphates as substrates. The sequence is that of DNA-directed RNA polymerase subunit beta' from Nostoc punctiforme (strain ATCC 29133 / PCC 73102).